The following is a 179-amino-acid chain: Large ribosomal subunit protein uL6 (179 aa).

It belongs to the universal ribosomal protein uL6 family. As to quaternary structure, part of the 50S ribosomal subunit.

In terms of biological role, this protein binds to the 23S rRNA, and is important in its secondary structure. It is located near the subunit interface in the base of the L7/L12 stalk, and near the tRNA binding site of the peptidyltransferase center. The chain is Large ribosomal subunit protein uL6 from Leptospira biflexa serovar Patoc (strain Patoc 1 / ATCC 23582 / Paris).